Reading from the N-terminus, the 132-residue chain is Small ribosomal subunit protein uS8 (132 aa).

It belongs to the universal ribosomal protein uS8 family. In terms of assembly, part of the 30S ribosomal subunit. Contacts proteins S5 and S12.

Its function is as follows. One of the primary rRNA binding proteins, it binds directly to 16S rRNA central domain where it helps coordinate assembly of the platform of the 30S subunit. This Psychrobacter arcticus (strain DSM 17307 / VKM B-2377 / 273-4) protein is Small ribosomal subunit protein uS8.